We begin with the raw amino-acid sequence, 378 residues long: MKVLAAMSGGVDSAVAAARAVDAGHDVVGVHLALSRMPGTLRTGSRGCCTIEDASDAWRACERLGIPFYTWDFSERFAEDVVDDFVAEYEAGRTPNPCMRCNERIKFAALLERALELGFDAVCTGHYAAVRPGPDGSLELHRAADDAKDQSYVLGVLTADQLAHCLFPLADTPSKELVRAEAAERGLSVAAKPDSHDICFIPDGDTRGWLAERIDLAPGPIVDPEGQELGTHAGAQAFTVGQRKGLAIGRPAPDGKPRFVLEVRPKENKVVVGGRELLDVDRITGIRPSWAGAPVPEARTGAWFDCALQFRAHGEIVEARARQRADAAGHPGWEIEPARPLRGVAPGQTAVLYRGTRVLGQATIDTARNARLSAPADA.

ATP-binding positions include 6-13 and Leu-32; that span reads AMSGGVDS. The active-site Nucleophile is the Cys-101. Cys-101 and Cys-199 are joined by a disulfide. Gly-125 provides a ligand contact to ATP. Positions 148–150 are interaction with tRNA; sequence KDQ. Residue Cys-199 is the Cysteine persulfide intermediate of the active site.

Belongs to the MnmA/TRMU family.

The protein localises to the cytoplasm. It carries out the reaction S-sulfanyl-L-cysteinyl-[protein] + uridine(34) in tRNA + AH2 + ATP = 2-thiouridine(34) in tRNA + L-cysteinyl-[protein] + A + AMP + diphosphate + H(+). Functionally, catalyzes the 2-thiolation of uridine at the wobble position (U34) of tRNA, leading to the formation of s(2)U34. The sequence is that of tRNA-specific 2-thiouridylase MnmA from Micrococcus luteus (strain ATCC 4698 / DSM 20030 / JCM 1464 / CCM 169 / CCUG 5858 / IAM 1056 / NBRC 3333 / NCIMB 9278 / NCTC 2665 / VKM Ac-2230) (Micrococcus lysodeikticus).